Here is a 216-residue protein sequence, read N- to C-terminus: Large ribosomal subunit protein uL4 (216 aa).

The tract at residues 51-78 (KGRSEVHGSNTKPYKQKGTGRARRGDKK) is disordered. Basic residues predominate over residues 64–76 (YKQKGTGRARRGD).

The protein belongs to the universal ribosomal protein uL4 family. Part of the 50S ribosomal subunit.

In terms of biological role, one of the primary rRNA binding proteins, this protein initially binds near the 5'-end of the 23S rRNA. It is important during the early stages of 50S assembly. It makes multiple contacts with different domains of the 23S rRNA in the assembled 50S subunit and ribosome. Its function is as follows. Forms part of the polypeptide exit tunnel. This Treponema pallidum (strain Nichols) protein is Large ribosomal subunit protein uL4.